We begin with the raw amino-acid sequence, 635 residues long: Threonine--tRNA ligase (635 aa).

A TGS domain is found at 1–61; it reads MVSIRLPDGS…DHDVALAIVT (61 aa). Residues 242–533 are catalytic; it reads DHRKLGKQLD…LIEHHAGAMP (292 aa). The Zn(2+) site is built by C333, H384, and H510.

Belongs to the class-II aminoacyl-tRNA synthetase family. In terms of assembly, homodimer. Zn(2+) is required as a cofactor.

The protein localises to the cytoplasm. The enzyme catalyses tRNA(Thr) + L-threonine + ATP = L-threonyl-tRNA(Thr) + AMP + diphosphate + H(+). Its function is as follows. Catalyzes the attachment of threonine to tRNA(Thr) in a two-step reaction: L-threonine is first activated by ATP to form Thr-AMP and then transferred to the acceptor end of tRNA(Thr). Also edits incorrectly charged L-seryl-tRNA(Thr). This Paraburkholderia phytofirmans (strain DSM 17436 / LMG 22146 / PsJN) (Burkholderia phytofirmans) protein is Threonine--tRNA ligase.